We begin with the raw amino-acid sequence, 151 residues long: Melatonin receptor type 1C (151 aa).

At 1-13 the chain is on the cytoplasmic side; it reads CHSLRYDRLYSRR. The chain crosses the membrane as a helical span at residues 14–34; it reads NTCLYLLLTWMLTALATVPNF. At 35–58 the chain is on the extracellular side; it reads LVGSLKYDPRVFSCTFTQTASSSY. The chain crosses the membrane as a helical span at residues 59–79; it reads TVCVVLIHFLVPLGVVSFCYL. At 80-109 the chain is on the cytoplasmic side; the sequence is RIWTLVIRVKGRVRPNPKVRAADLRNFLTM. A helical membrane pass occupies residues 110–130; it reads FVVFVLFAVCWAPLNFIGLAV. The Extracellular portion of the chain corresponds to 131 to 143; that stretch reads AINPAKVAPNIPE. Residues 144–151 traverse the membrane as a helical segment; sequence WLFVTSYF.

Belongs to the G-protein coupled receptor 1 family.

It localises to the cell membrane. Functionally, high affinity receptor for melatonin. The activity of this receptor is mediated by pertussis toxin sensitive G proteins that inhibits adenylate cyclase activity. In Danio rerio (Zebrafish), this protein is Melatonin receptor type 1C (mtnr1c).